The primary structure comprises 458 residues: 5-hydroxytryptamine receptor 2C (458 aa).

Positions 1–32 are cleaved as a signal peptide; the sequence is MVNLRNAVHSFLVHLIGLLVWQCDISVSPVAA. Residues 33–55 are Extracellular-facing; sequence IVTDIFNTSDGGRFKFPDGVQNW. Residues 56–80 traverse the membrane as a helical segment; it reads PALSIVVIIIMTIGGNILVIMAVSM. Residues 81–86 lie on the Cytoplasmic side of the membrane; that stretch reads EKKLHN. A helical membrane pass occupies residues 87-111; sequence ATNYFLMSLAIADMLVGLLVMPLSL. The Extracellular portion of the chain corresponds to 112–128; that stretch reads LAILYDYVWPLPRYLCP. An intrachain disulfide couples C127 to C207. The helical transmembrane segment at 129 to 151 threads the bilayer; sequence VWISLDVLFSTASIMHLCAISLD. T139 serves as a coordination point for ergotamine. A DRY motif; important for ligand-induced conformation changes motif is present at residues 151 to 153; sequence DRY. Topologically, residues 152-167 are cytoplasmic; sequence RYVAIRNPIEHSRFNS. A helical transmembrane segment spans residues 168–189; the sequence is RTKAIMKIAIVWAISIGVSVPI. The Extracellular portion of the chain corresponds to 190-213; that stretch reads PVIGLRDERKVFVNNTTCVLNDPN. L209 provides a ligand contact to ergotamine. A helical transmembrane segment spans residues 214-236; it reads FVLIGSFVAFFIPLTIMVITYCL. Over 237–311 the chain is Cytoplasmic; it reads TIYVLRRQAL…AINNERKASK (75 aa). A disordered region spans residues 274–301; that stretch reads EENSANPNQDQNARRRKKKERRPRGTMQ. Over residues 287–297 the composition is skewed to basic residues; the sequence is RRRKKKERRPR. A helical transmembrane segment spans residues 312–336; it reads VLGIVFFVFLIMWCPFFITNILSVL. A disulfide bond links C337 and C341. The Extracellular segment spans residues 337–347; that stretch reads CEKSCNQKLME. A helical membrane pass occupies residues 348–370; the sequence is KLLNVFVWIGYVCSGINPLVYTL. An NPxxY motif; important for ligand-induced conformation changes and signaling motif is present at residues 364 to 368; it reads NPLVY. Topologically, residues 371–458 are cytoplasmic; that stretch reads FNKIYRRAFS…SVVSERISSV (88 aa). The PDZ-binding motif lies at 456–458; the sequence is SSV.

Belongs to the G-protein coupled receptor 1 family. Interacts with MPDZ. Interacts with ARRB2. Interacts with MPP3; this interaction stabilizes the receptor at the plasma membrane and prevents the desensitization of the HTR2C receptor-mediated calcium response.

Its subcellular location is the cell membrane. Functionally, G-protein coupled receptor for 5-hydroxytryptamine (serotonin). Also functions as a receptor for various drugs and psychoactive substances, including ergot alkaloid derivatives, 1-2,5,-dimethoxy-4-iodophenyl-2-aminopropane (DOI) and lysergic acid diethylamide (LSD). Ligand binding causes a conformation change that triggers signaling via guanine nucleotide-binding proteins (G proteins) and modulates the activity of downstream effectors. HTR2C is coupled to G(q)/G(11) G alpha proteins and activates phospholipase C-beta, releasing diacylglycerol (DAG) and inositol 1,4,5-trisphosphate (IP3) second messengers that modulate the activity of phosphatidylinositol 3-kinase and promote the release of Ca(2+) ions from intracellular stores, respectively. Beta-arrestin family members inhibit signaling via G proteins and mediate activation of alternative signaling pathways. Regulates neuronal activity via the activation of short transient receptor potential calcium channels in the brain, and thereby modulates the activation of pro-opiomelanocortin neurons and the release of CRH that then regulates the release of corticosterone. Plays a role in the regulation of appetite and eating behavior, responses to anxiogenic stimuli and stress. Plays a role in insulin sensitivity and glucose homeostasis. The polypeptide is 5-hydroxytryptamine receptor 2C (Pan troglodytes (Chimpanzee)).